A 185-amino-acid polypeptide reads, in one-letter code: NAD(P)H-quinone oxidoreductase subunit J (185 aa).

Belongs to the complex I 30 kDa subunit family. NDH-1 can be composed of about 15 different subunits; different subcomplexes with different compositions have been identified which probably have different functions.

The protein resides in the cellular thylakoid membrane. The catalysed reaction is a plastoquinone + NADH + (n+1) H(+)(in) = a plastoquinol + NAD(+) + n H(+)(out). It catalyses the reaction a plastoquinone + NADPH + (n+1) H(+)(in) = a plastoquinol + NADP(+) + n H(+)(out). Functionally, NDH-1 shuttles electrons from an unknown electron donor, via FMN and iron-sulfur (Fe-S) centers, to quinones in the respiratory and/or the photosynthetic chain. The immediate electron acceptor for the enzyme in this species is believed to be plastoquinone. Couples the redox reaction to proton translocation, and thus conserves the redox energy in a proton gradient. Cyanobacterial NDH-1 also plays a role in inorganic carbon-concentration. In Prochlorococcus marinus (strain MIT 9303), this protein is NAD(P)H-quinone oxidoreductase subunit J.